The sequence spans 512 residues: Endo-1,4-beta-xylanase A (512 aa).

The N-terminal stretch at 1-30 is a signal peptide; that stretch reads MKRKVKKMAAMATSIIMAIMIILHSIPVLA. The 196-residue stretch at 33–228 folds into the GH11 domain; that stretch reads IIYDNETGTH…SSGYANVYKN (196 aa). The active-site Nucleophile is glutamate 124. Glutamate 215 functions as the Proton donor in the catalytic mechanism. CBM6 domains lie at 251–371 and 388–508; these read SIIE…FIFS and SIIQ…FVFS. The Ca(2+) site is built by glutamate 254 and glutamate 256. Threonine 271 contacts D-xylotriose. A Ca(2+)-binding site is contributed by arginine 276. The stretch at 279–340 is repeat 1; sequence GYIENGNTVT…SSTGSWNTYQ (62 aa). The interval 279 to 477 is 2 X 61 AA approximate repeats; sequence GYIENGNTVT…GSTGSFDTYR (199 aa). 3 residues coordinate D-xylotriose: tyrosine 280, asparagine 337, and asparagine 364. Tyrosine 280, asparagine 337, and asparagine 364 together coordinate D-xylobiose. Aspartate 366, glutamine 391, glutamate 393, and serine 413 together coordinate Ca(2+). The stretch at 416-477 is repeat 2; it reads GYIENGYSTT…GSTGSFDTYR (62 aa). Tyrosine 417, aspartate 474, and asparagine 501 together coordinate D-xylotriose. Position 503 (aspartate 503) interacts with Ca(2+).

This sequence belongs to the glycosyl hydrolase 11 (cellulase G) family.

It carries out the reaction Endohydrolysis of (1-&gt;4)-beta-D-xylosidic linkages in xylans.. The protein operates within glycan degradation; xylan degradation. The sequence is that of Endo-1,4-beta-xylanase A (xynA) from Thermoclostridium stercorarium (Clostridium stercorarium).